The sequence spans 146 residues: Meiotically up-regulated gene 151 protein (146 aa).

Positions 1 to 40 (MSLVAYDSEEEEQTSLVNENNDIKGRSEEPHWKIPNSPKA) are disordered. A compositionally biased stretch (basic and acidic residues) spans 21 to 32 (NDIKGRSEEPHW).

It localises to the nucleus. In terms of biological role, has a role in meiosis. The polypeptide is Meiotically up-regulated gene 151 protein (mug151) (Schizosaccharomyces pombe (strain 972 / ATCC 24843) (Fission yeast)).